Here is a 220-residue protein sequence, read N- to C-terminus: Glutathione S-transferase U23 (220 aa).

The 80-residue stretch at 3–82 folds into the GST N-terminal domain; sequence EEIILLDYWA…YIDELWPDTN (80 aa). Glutathione-binding positions include 13–14, 39–40, 53–54, and 66–67; these read SM, NK, KI, and ES. The region spanning 88–208 is the GST C-terminal domain; sequence DPYQRAQARF…LPDSDKVLKS (121 aa).

It belongs to the GST superfamily. Tau family.

The protein resides in the cytoplasm. Its subcellular location is the cytosol. The enzyme catalyses RX + glutathione = an S-substituted glutathione + a halide anion + H(+). In terms of biological role, may be involved in the conjugation of reduced glutathione to a wide number of exogenous and endogenous hydrophobic electrophiles and have a detoxification role against certain herbicides. This Arabidopsis thaliana (Mouse-ear cress) protein is Glutathione S-transferase U23 (GSTU23).